Consider the following 198-residue polypeptide: COMM domain-containing protein 9 (198 aa).

Residue Ala-2 is modified to N-acetylalanine. The COMM domain occupies 122-196 (RLVDLDWRVD…RIRDQLSAVA (75 aa)).

This sequence belongs to the COMM domain-containing protein 9 family. As to quaternary structure, component of the commander complex consisting of the CCC subcomplex and the retriever subcomplex. Component of the CCC (COMMD/CCDC22/CCDC93) subcomplex consisting of COMMD1, COMMD2, COMMD3, COMMD4, COMMD5, COMMD6, COMMD7, COMMD8, COMMD9, COMMD10, CCDC22 and CCDC93; within the complex forms a heterodimer with COMMD7. Interacts with RELB and NFKB1/p105. Interacts with CCDC22, CCDC93, SCNN1B, CUL1.

It is found in the nucleus. The protein localises to the cytoplasmic vesicle. Functionally, scaffold protein in the commander complex that is essential for endosomal recycling of transmembrane cargos; the commander complex is composed of the CCC subcomplex and the retriever subcomplex. May modulate activity of cullin-RING E3 ubiquitin ligase (CRL) complexes. May down-regulate activation of NF-kappa-B. Modulates Na(+) transport in epithelial cells by regulation of apical cell surface expression of amiloride-sensitive sodium channel (ENaC) subunits. This is COMM domain-containing protein 9 (Commd9) from Mus musculus (Mouse).